The chain runs to 222 residues: Sortase A (222 aa).

Over 1–7 the chain is Cytoplasmic; the sequence is MLKKTIA. Residues 8–28 traverse the membrane as a helical segment; sequence IIILIIGLLLIFSPFIKNGIV. The Extracellular portion of the chain corresponds to 29–222; it reads KYMSGHETIE…ELENKYFPSK (194 aa). His-127 functions as the Proton donor/acceptor in the catalytic mechanism. Residue Cys-188 is the Acyl-thioester intermediate of the active site.

This sequence belongs to the bacterial sortase family. Class A subfamily.

It localises to the cell membrane. Its activity is regulated as follows. Activity is enhanced by Zn(2+) and strongly enhanced by Ca(2+). Inhibited by chalcone, a precursor of several flavonoids, which blocks the SrtA active site. In terms of biological role, transpeptidase that anchors surface proteins to the cell wall. Recognizes and modifies its substrate by proteolytic cleavage of a C-terminal sorting signal. Following cleavage, a covalent intermediate is formed via a thioester bond between the sortase and its substrate, which is then transferred and covalently attached to the cell wall. This sortase recognizes a Leu-Pro-x-Thr-Gly (LPXTG) motif, which is cleaved by the sortase between the threonine and glycine residues. Involved in pathogenesis. May regulate the rate of synthesis and/or the stability of a subset of LPXTG proteins. Not involved in cell wall-anchoring of Hbp2 (SvpA) or Hbp1. This Listeria monocytogenes serovar 1/2a (strain ATCC BAA-679 / EGD-e) protein is Sortase A.